We begin with the raw amino-acid sequence, 743 residues long: Mitochondrial exoribonuclease DSS-1 (743 aa).

A mitochondrion-targeting transit peptide spans 1-67 (MTPRRVAKLV…KELLHLQRSL (67 aa)). In terms of domain architecture, RNB spans 186–542 (THNPAYAIDS…VHHQLKVWLW (357 aa)). The interval 320 to 357 (VGNQHHHTERESTQASPAKREEGKKGMVASGGTSSCRP) is disordered. Basic and acidic residues predominate over residues 325-344 (HHTERESTQASPAKREEGKK).

It belongs to the RNR ribonuclease family. As to quaternary structure, component of the mitochondrial 3' processome (MPsome) complex composed at least of terminal uridylyltransferase KRET1/TUT1, 3'-5' exonuclease DSS1, MPSS1, MPSS2 and MPSS3. Within the complex, interacts with KRET1 and MPSS2. Component of the mitochondrial degradosome complex composed at least of 3'-5' exonuclease DSS1 and helicase SUV3. Within the complex, interacts with helicase SUV3.

It is found in the mitochondrion. The catalysed reaction is Exonucleolytic cleavage in the 3'- to 5'-direction to yield nucleoside 5'-phosphates.. 3'-5'exoribonuclease which is involved in the post-transcriptional processing, editing and degradation of mitochondrial RNAs, including mRNAs, rRNAs and guided RNAs (gRNA). As part of the mitochondrial 3' processome (MPsome), involved in the maturation of guided RNA (gRNA) precursors by catalyzing the processive 3'-5' degradation of uridylated gRNA precursors. Plays a role in the degradation of 12S rRNA processing intermediates and maturation by-products. In Trypanosoma brucei brucei, this protein is Mitochondrial exoribonuclease DSS-1.